The sequence spans 487 residues: Inosine-5'-monophosphate dehydrogenase (487 aa).

2 CBS domains span residues 93 to 149 (IVSD…NKTV) and 153 to 214 (MTPK…CKDE). NAD(+) contacts are provided by residues D248, 248-250 (DSS), and 298-300 (GIG). K(+) contacts are provided by G300 and G302. S303 is a binding site for IMP. Residue C305 coordinates K(+). The active-site Thioimidate intermediate is C305. Residues 338–340 (DGG), 361–362 (GS), and 385–389 (YRGMG) each bind IMP. Residue R401 is the Proton acceptor of the active site. IMP is bound at residue E415. Residues E469, S470, and H471 each coordinate K(+).

It belongs to the IMPDH/GMPR family. In terms of assembly, homotetramer. Requires K(+) as cofactor.

The enzyme catalyses IMP + NAD(+) + H2O = XMP + NADH + H(+). The protein operates within purine metabolism; XMP biosynthesis via de novo pathway; XMP from IMP: step 1/1. With respect to regulation, mycophenolic acid (MPA) is a non-competitive inhibitor that prevents formation of the closed enzyme conformation by binding to the same site as the amobile flap. In contrast, mizoribine monophosphate (MZP) is a competitive inhibitor that induces the closed conformation. MPA is a potent inhibitor of mammalian IMPDHs but a poor inhibitor of the bacterial enzymes. MZP is a more potent inhibitor of bacterial IMPDH. Catalyzes the conversion of inosine 5'-phosphate (IMP) to xanthosine 5'-phosphate (XMP), the first committed and rate-limiting step in the de novo synthesis of guanine nucleotides, and therefore plays an important role in the regulation of cell growth. This is Inosine-5'-monophosphate dehydrogenase from Pasteurella multocida (strain Pm70).